Consider the following 78-residue polypeptide: Exodeoxyribonuclease 7 small subunit (78 aa).

The protein belongs to the XseB family. Heterooligomer composed of large and small subunits.

The protein localises to the cytoplasm. The enzyme catalyses Exonucleolytic cleavage in either 5'- to 3'- or 3'- to 5'-direction to yield nucleoside 5'-phosphates.. Bidirectionally degrades single-stranded DNA into large acid-insoluble oligonucleotides, which are then degraded further into small acid-soluble oligonucleotides. This Synechococcus sp. (strain JA-2-3B'a(2-13)) (Cyanobacteria bacterium Yellowstone B-Prime) protein is Exodeoxyribonuclease 7 small subunit.